We begin with the raw amino-acid sequence, 95 residues long: Acyl carrier protein (95 aa).

Residues Lys-4–Val-79 form the Carrier domain. Ser-39 is subject to O-(pantetheine 4'-phosphoryl)serine.

The protein belongs to the acyl carrier protein (ACP) family. 4'-phosphopantetheine is transferred from CoA to a specific serine of apo-ACP by AcpS. This modification is essential for activity because fatty acids are bound in thioester linkage to the sulfhydryl of the prosthetic group.

Its subcellular location is the cytoplasm. The protein operates within lipid metabolism; fatty acid biosynthesis. Its function is as follows. Carrier of the growing fatty acid chain in fatty acid biosynthesis. This is Acyl carrier protein from Saccharopolyspora erythraea (strain ATCC 11635 / DSM 40517 / JCM 4748 / NBRC 13426 / NCIMB 8594 / NRRL 2338).